We begin with the raw amino-acid sequence, 695 residues long: Nucleoprotein (695 aa).

Coiled-coil stretches lie at residues Val-316 to Glu-341 and Gln-372 to Gln-399. Residues Gln-424 to Arg-611 are disordered. The segment covering Val-438–Thr-447 has biased composition (basic and acidic residues). Polar residues-rich tracts occupy residues Arg-495–Gly-505 and Thr-537–Glu-552. Residues Pro-603–Pro-606 carry the PTAP/PSAP motif motif.

Belongs to the filoviruses nucleoprotein family. In terms of assembly, homooligomer. Homomultimerizes to form the nucleocapsid. Binds to viral genomic RNA. Interacts with VP35 and VP30 to form the nucleocapsid. Also interacts with VP24 and VP40. Post-translationally, phosphorylated.

The protein localises to the virion. Its subcellular location is the host cytoplasm. Encapsidates the genome, protecting it from nucleases. The encapsidated genomic RNA is termed the nucleocapsid and serves as template for transcription and replication. During replication, encapsidation by NP is coupled to RNA synthesis and all replicative products are resistant to nucleases. This Chlorocebus aethiops (Green monkey) protein is Nucleoprotein (NP).